Consider the following 257-residue polypeptide: Ditrans,polycis-undecaprenyl-diphosphate synthase ((2E,6E)-farnesyl-diphosphate specific) (257 aa).

The active site involves Asp23. Residue Asp23 participates in Mg(2+) binding. Substrate contacts are provided by residues 24–27 (GNGR), Trp28, Arg36, His40, and 68–70 (SSE). Asn71 (proton acceptor) is an active-site residue. Residues Trp72, Arg74, Arg191, and 197–199 (RIS) contribute to the substrate site. Glu210 is a binding site for Mg(2+).

This sequence belongs to the UPP synthase family. As to quaternary structure, homodimer. Mg(2+) is required as a cofactor.

The enzyme catalyses 8 isopentenyl diphosphate + (2E,6E)-farnesyl diphosphate = di-trans,octa-cis-undecaprenyl diphosphate + 8 diphosphate. Its function is as follows. Catalyzes the sequential condensation of isopentenyl diphosphate (IPP) with (2E,6E)-farnesyl diphosphate (E,E-FPP) to yield (2Z,6Z,10Z,14Z,18Z,22Z,26Z,30Z,34E,38E)-undecaprenyl diphosphate (di-trans,octa-cis-UPP). UPP is the precursor of glycosyl carrier lipid in the biosynthesis of bacterial cell wall polysaccharide components such as peptidoglycan and lipopolysaccharide. The polypeptide is Ditrans,polycis-undecaprenyl-diphosphate synthase ((2E,6E)-farnesyl-diphosphate specific) (Xanthomonas axonopodis pv. citri (strain 306)).